The following is a 463-amino-acid chain: MTSTRTETDTFGPIEVASDRYWGAQAQRSLGNFKIGWEKQPLAIVRALGIVKQAAARANMALGRLDPAIGDAIVKAAQEVIDGKLDEHFPLVVWQTGSGTQSNMNANEVVSNRAIELLGGVMGSKKPVHPNDHVNMSQSSNDTYPTAMHIACAERVIHDLLPALKHLHKALEEKVKAFDHIIKIGRTHTQDATPLTLGQEFSGYAAQVASSIKRIEMTLPGLCELAQGGTAVGTGLNAPVGFAEKVAEEIAAITGIGFTSAPNKFEALAAHDSMVFSHGAINATAAALFKIANDIRFLGSGPRSGLGELSLPENEPGSSIMPGKVNPTQCEALTQVCVQVFGNHAALTFAGSQGHFELNVYNPLMAYNFLQSVQLLADAAISFTDNCVVGIEAREDNIKAALDRSLMLVTALAPKIGYDNAAKIAKTAHKNGTTLREEAVGGGYVTDEEFDAVVRPETMIGPA.

Substrate is bound by residues 98–100 (SGT), 129–132 (HPND), 139–141 (SSN), and threonine 187. Histidine 188 functions as the Proton donor/acceptor in the catalytic mechanism. The active site involves serine 318. Substrate-binding positions include serine 319 and 324-326 (KVN).

Belongs to the class-II fumarase/aspartase family. Fumarase subfamily. In terms of assembly, homotetramer.

The protein resides in the cytoplasm. It catalyses the reaction (S)-malate = fumarate + H2O. The protein operates within carbohydrate metabolism; tricarboxylic acid cycle; (S)-malate from fumarate: step 1/1. Its function is as follows. Involved in the TCA cycle. Catalyzes the stereospecific interconversion of fumarate to L-malate. The sequence is that of Fumarate hydratase class II from Rhizobium meliloti (strain 1021) (Ensifer meliloti).